A 231-amino-acid chain; its full sequence is uncharacterized protein (231 aa).

Position 10-34 (10-34 (VVTGAGSGIGEAIATLLHEEGAKVV)) interacts with NADP(+). Residue serine 140 coordinates substrate. Tyrosine 153 serves as the catalytic Proton acceptor.

It belongs to the short-chain dehydrogenases/reductases (SDR) family.

This is an uncharacterized protein from Staphylococcus aureus (strain MRSA252).